A 293-amino-acid polypeptide reads, in one-letter code: Sodium-type flagellar protein MotY (293 aa).

A signal peptide spans 1-21; sequence MNKWLITSGVMLSLLSANSYA. One can recognise an OmpA-like domain in the interval 175–292; it reads YSFEDIAFTI…RVVISLGRTQ (118 aa).

Its subcellular location is the cell membrane. Functionally, may play the role of a stator in the sodium flagellar motor, stabilizing the force-generating unit through direct interaction with the cell wall. This Vibrio parahaemolyticus serotype O3:K6 (strain RIMD 2210633) protein is Sodium-type flagellar protein MotY.